Here is a 58-residue protein sequence, read N- to C-terminus: Ribulose bisphosphate carboxylase large chain (58 aa).

Positions 1 to 2 (MS) are excised as a propeptide. An N-acetylproline modification is found at Pro3. The residue at position 14 (Lys14) is an N6,N6,N6-trimethyllysine.

This sequence belongs to the RuBisCO large chain family. Type I subfamily. Heterohexadecamer of 8 large chains and 8 small chains.

The protein localises to the plastid. It is found in the chloroplast. It catalyses the reaction 2 (2R)-3-phosphoglycerate + 2 H(+) = D-ribulose 1,5-bisphosphate + CO2 + H2O. The catalysed reaction is D-ribulose 1,5-bisphosphate + O2 = 2-phosphoglycolate + (2R)-3-phosphoglycerate + 2 H(+). Functionally, ruBisCO catalyzes two reactions: the carboxylation of D-ribulose 1,5-bisphosphate, the primary event in carbon dioxide fixation, as well as the oxidative fragmentation of the pentose substrate in the photorespiration process. Both reactions occur simultaneously and in competition at the same active site. This chain is Ribulose bisphosphate carboxylase large chain (rbcL), found in Euphorbia characias (Albanian spurge).